The following is a 229-amino-acid chain: MGITGMIYMVPMVFSLIVLISCSSTMGYNYFQFTQQYQPAVCNSNPTPCKDPPDKLFTVHGLWPSNDVGDDPIYCKNKTIKSQQIGNLTAQLIIIWPNVLDRTDHVGFWNRQWNKHGSCGKAPTIKDEMHYFKTVIKMYITQKQNVSEILSRAKIEPEGKIRRRDDIINAIRLGTKDKKPKLKCQKNNQTTELVEITICSDRNLTQFIDCPRSSFKGSPFHCPTNHILY.

A signal peptide spans 1–27 (MGITGMIYMVPMVFSLIVLISCSSTMG). Residue Gln-36 coordinates RNA. Cys-42 and Cys-49 are oxidised to a cystine. RNA is bound at residue His-60. His-60 functions as the Proton donor in the catalytic mechanism. An intrachain disulfide couples Cys-75 to Cys-119. N-linked (GlcNAc) asparagine glycosylation is found at Asn-77 and Asn-87. RNA contacts are provided by residues 98-99 (NV), Phe-108, 111-112 (RQ), and 115-116 (KH). Residue Gln-112 is part of the active site. The active-site Proton acceptor is the His-116. Residue Asn-145 is glycosylated (N-linked (GlcNAc...) (high mannose) asparagine). Cystine bridges form between Cys-184–Cys-222 and Cys-199–Cys-210. N-linked (GlcNAc) asparagine; alternate glycosylation is present at Asn-188. N-linked (GlcNAc...) asparagine; alternate glycosylation is found at Asn-188 and Asn-203.

Belongs to the RNase T2 family. The N-glycans attached at Asn-188 and Asn-203 consist of either monosaccharide (GlcNAc) or disaccharide (GlcNAc-GlcNAc) that could not be distinguished.

The enzyme catalyses a ribonucleotidyl-ribonucleotide-RNA + H2O = a 3'-end 3'-phospho-ribonucleotide-RNA + a 5'-end dephospho-ribonucleoside-RNA + H(+). Self-incompatibility (SI) is the inherited ability of a flowering plant to prevent self-fertilization by discriminating between self and non-self pollen during pollination. In many species, self-incompatibility is controlled by the single, multiallelic locus S. The chain is Ribonuclease S-6 from Pyrus pyrifolia (Chinese pear).